Here is a 393-residue protein sequence, read N- to C-terminus: Sulfate adenylyltransferase (393 aa).

It belongs to the sulfate adenylyltransferase family.

It carries out the reaction sulfate + ATP + H(+) = adenosine 5'-phosphosulfate + diphosphate. It participates in sulfur metabolism; hydrogen sulfide biosynthesis; sulfite from sulfate: step 1/3. This chain is Sulfate adenylyltransferase, found in Symbiobacterium thermophilum (strain DSM 24528 / JCM 14929 / IAM 14863 / T).